We begin with the raw amino-acid sequence, 394 residues long: MTTAQTQELDVQPTPLALLLLGREADPRSERGVECPGDLPSPSDPDLVARARAAKEKLGDKVFVLGHHYQRDEVIQFADVTGDSFKLARDAAARPEAEYIVFCGVHFMAESADILTSNDQKVVLPDLAAGCSMADMATAEQVAECWDVLTEAGIAEQVVPVSYMNSSADIKAFTGKHGGTICTSSNAERALNWAFEQGEKVLFLPDQHLGRNTAVRDLGMSLEDCVVYNPHRPNGGLTAKELRDANMILWRGHCSVHGRFSLDSVNDVRERIPGVNVLVHPECKHEVVAAADYVGSTEYIIKALEAAPAGSKWAIGTELNLVRRLANRFAAEDKEIVFLDKTVCFCSTMNRIDLPHLVWTLESLAEGTLVNRIEVDQETEAFAKLALERMLALP.

Residues His-67 and Ser-84 each contribute to the iminosuccinate site. Cys-131 is a binding site for [4Fe-4S] cluster. Residues 163–165 (YMN) and Ser-184 each bind iminosuccinate. Cys-254 serves as a coordination point for [4Fe-4S] cluster. Iminosuccinate is bound by residues 280 to 282 (HPE) and Thr-297. Cys-346 contributes to the [4Fe-4S] cluster binding site.

This sequence belongs to the quinolinate synthase family. Type 3 subfamily. Requires [4Fe-4S] cluster as cofactor.

It localises to the cytoplasm. It catalyses the reaction iminosuccinate + dihydroxyacetone phosphate = quinolinate + phosphate + 2 H2O + H(+). It functions in the pathway cofactor biosynthesis; NAD(+) biosynthesis; quinolinate from iminoaspartate: step 1/1. In terms of biological role, catalyzes the condensation of iminoaspartate with dihydroxyacetone phosphate to form quinolinate. This Streptomyces coelicolor (strain ATCC BAA-471 / A3(2) / M145) protein is Quinolinate synthase.